The primary structure comprises 102 residues: Alpha-hemoglobin-stabilizing protein (102 aa).

It belongs to the AHSP family. As to quaternary structure, monomer. Forms a heterodimer with free alpha-hemoglobin. Does not bind beta-hemoglobin nor alpha(2)beta(2) hemoglobin A. As to expression, expressed in blood and bone marrow.

It localises to the cytoplasm. Acts as a chaperone to prevent the harmful aggregation of alpha-hemoglobin during normal erythroid cell development. Specifically protects free alpha-hemoglobin from precipitation. It is predicted to modulate pathological states of alpha-hemoglobin excess such as beta-thalassemia. This Homo sapiens (Human) protein is Alpha-hemoglobin-stabilizing protein (AHSP).